We begin with the raw amino-acid sequence, 123 residues long: DNA-directed RNA polymerase subunit omega (123 aa).

The segment at 72 to 100 (QRVLPSEDEEDAAREERGQQMEALPAPPV) is disordered.

This sequence belongs to the RNA polymerase subunit omega family. As to quaternary structure, the RNAP catalytic core consists of 2 alpha, 1 beta, 1 beta' and 1 omega subunit. When a sigma factor is associated with the core the holoenzyme is formed, which can initiate transcription.

It carries out the reaction RNA(n) + a ribonucleoside 5'-triphosphate = RNA(n+1) + diphosphate. Promotes RNA polymerase assembly. Latches the N- and C-terminal regions of the beta' subunit thereby facilitating its interaction with the beta and alpha subunits. The sequence is that of DNA-directed RNA polymerase subunit omega from Maricaulis maris (strain MCS10) (Caulobacter maris).